The chain runs to 471 residues: GTPase Der (471 aa).

EngA-type G domains are found at residues 5-168 (PVIA…TDLE) and 186-359 (IRVA…DSAF). GTP is bound by residues 11–18 (GRPNVGKS), 58–62 (DTGGI), 120–123 (NKTD), 192–199 (GRPNVGKS), 239–243 (DTAGV), and 304–307 (NKWD). In terms of domain architecture, KH-like spans 360–444 (IKIGTNELTR…PIRLEFKSGT (85 aa)).

This sequence belongs to the TRAFAC class TrmE-Era-EngA-EngB-Septin-like GTPase superfamily. EngA (Der) GTPase family. Associates with the 50S ribosomal subunit.

In terms of biological role, GTPase that plays an essential role in the late steps of ribosome biogenesis. In Alcanivorax borkumensis (strain ATCC 700651 / DSM 11573 / NCIMB 13689 / SK2), this protein is GTPase Der.